Here is a 317-residue protein sequence, read N- to C-terminus: Ribosomal protein L11 methyltransferase (317 aa).

Thr-158, Gly-179, Asp-201, and Asn-244 together coordinate S-adenosyl-L-methionine.

This sequence belongs to the methyltransferase superfamily. PrmA family.

The protein localises to the cytoplasm. The enzyme catalyses L-lysyl-[protein] + 3 S-adenosyl-L-methionine = N(6),N(6),N(6)-trimethyl-L-lysyl-[protein] + 3 S-adenosyl-L-homocysteine + 3 H(+). Methylates ribosomal protein L11. In Streptococcus mutans serotype c (strain ATCC 700610 / UA159), this protein is Ribosomal protein L11 methyltransferase.